Consider the following 223-residue polypeptide: Adenylate kinase 4, mitochondrial (223 aa).

Residue 15-20 (GSGKGT) participates in a ribonucleoside 5'-triphosphate binding. Residues 35 to 64 (SSGHLLRENLKTGTEVGDVAKQYLEKGLLV) form an NMP region. Residues S36 and R41 each coordinate AMP. K60 is modified (N6-succinyllysine). AMP contacts are provided by residues 62-64 (LLV), 89-92 (GFPR), and Q96. The interval 125-162 (RRWIHPSSGRVYNLDFNPPQVQGIDDITGEPLVQQEDD) is LID. Residues R126 and 135-136 (VY) each bind a ribonucleoside 5'-triphosphate. Position 170 (R170) interacts with AMP. N6-acetyllysine is present on K175. An N6-acetyllysine; alternate mark is found at K179 and K186. K179 and K186 each carry N6-succinyllysine; alternate. Residue T199 coordinates a ribonucleoside 5'-triphosphate.

Belongs to the adenylate kinase family. AK3 subfamily. Monomer. Interacts with SLC25A5/ANT2. Expressed in kidney, liver, stomach, brain, spinal cord, heart, ovary, oviduct, colon, jejunum, ileum and testis (at protein level). In the brain, expressed in the pyramidal cells of the cerebrum and glial cells in the cerebellum (at protein level). In the heart, expressed by myocytes (at protein level). In the kidney, expressed in the proximal to distal tubule in the cortex and the outer and inner zones of the medulla (at protein level). In the stomach, expressed in stratified squamous epithelia in the forestomach and in the gastric pit and mucus producing cells of the glandular stomach (at protein level). Expressed in epithelial cells of the jejunum, ileum, and colon (at protein level). In the testis, expressed by spermatocytes (at protein level). In the ovaries, expressed by oocytes, follicular epithelial cells, and corpus luteum cells (at protein level). In the oviduct, expressed in the epithelia of the isthmus and the ciliated cells of the ampulla (at protein level). Expressed in the pyramidal cells in the hippocampus.

Its subcellular location is the mitochondrion matrix. It carries out the reaction a ribonucleoside 5'-phosphate + ATP = a ribonucleoside 5'-diphosphate + ADP. The enzyme catalyses AMP + ATP = 2 ADP. It catalyses the reaction GTP + AMP = GDP + ADP. The catalysed reaction is CMP + ATP = CDP + ADP. It carries out the reaction GTP + CMP = CDP + GDP. The enzyme catalyses dAMP + ATP = dADP + ADP. It catalyses the reaction dCMP + ATP = dCDP + ADP. The catalysed reaction is a 2'-deoxyribonucleoside 5'-diphosphate + ATP = a 2'-deoxyribonucleoside 5'-triphosphate + ADP. It carries out the reaction a ribonucleoside 5'-diphosphate + ATP = a ribonucleoside 5'-triphosphate + ADP. The enzyme catalyses GDP + ATP = GTP + ADP. It catalyses the reaction CDP + GTP = CTP + GDP. The catalysed reaction is CDP + ATP = CTP + ADP. It carries out the reaction UDP + ATP = UTP + ADP. The enzyme catalyses GTP + UDP = UTP + GDP. It catalyses the reaction dADP + GTP = dATP + GDP. The catalysed reaction is dCDP + GTP = dCTP + GDP. It carries out the reaction dCDP + ATP = dCTP + ADP. The enzyme catalyses dGDP + ATP = dGTP + ADP. It catalyses the reaction dTDP + GTP = dTTP + GDP. The catalysed reaction is dTDP + ATP = dTTP + ADP. Broad-specificity mitochondrial nucleoside phosphate kinase involved in cellular nucleotide homeostasis by catalyzing nucleoside-phosphate interconversions. Similar to other adenylate kinases, preferentially catalyzes the phosphorylation of the nucleoside monophosphate AMP with ATP as phosphate donor to produce ADP. Phosphorylates only AMP when using GTP as phosphate donor. In vitro, can also catalyze the phosphorylation of CMP, dAMP and dCMP and use GTP as an alternate phosphate donor. Moreover, exhibits a diphosphate kinase activity, producing ATP, CTP, GTP, UTP, TTP, dATP, dCTP and dGTP from the corresponding diphosphate substrates with either ATP or GTP as phosphate donors. Plays a role in controlling cellular ATP levels by regulating phosphorylation and activation of the energy sensor protein kinase AMPK. Plays a protective role in the cellular response to oxidative stress. The sequence is that of Adenylate kinase 4, mitochondrial from Mus musculus (Mouse).